We begin with the raw amino-acid sequence, 546 residues long: Mitochondrial distribution and morphology protein 34 (546 aa).

Residues 1–195 (MAFNFNWSPL…LPAIIHRLSL (195 aa)) form the SMP-LTD domain. Disordered regions lie at residues 208–230 (EVKA…QDPV), 299–319 (SHGG…SHVA), 344–382 (TMGA…CTDS), 395–416 (SSSA…SPDA), and 517–546 (RRIQ…AYGQ). Positions 349–362 (RHPRTRPSRKHKRR) are enriched in basic residues. Over residues 363–374 (VVDLRKPQKLDD) the composition is skewed to basic and acidic residues.

Belongs to the MDM34 family. Component of the ER-mitochondria encounter structure (ERMES) or MDM complex, composed of MMM1, MDM10, MDM12 and MDM34.

Its subcellular location is the mitochondrion outer membrane. Its function is as follows. Component of the ERMES/MDM complex, which serves as a molecular tether to connect the endoplasmic reticulum (ER) and mitochondria. Components of this complex are involved in the control of mitochondrial shape and protein biogenesis, and function in nonvesicular lipid trafficking between the ER and mitochondria. MDM34 is required for the interaction of the ER-resident membrane protein MMM1 and the outer mitochondrial membrane-resident beta-barrel protein MDM10. In Arthroderma otae (strain ATCC MYA-4605 / CBS 113480) (Microsporum canis), this protein is Mitochondrial distribution and morphology protein 34.